The chain runs to 563 residues: Arginine--tRNA ligase (563 aa).

Residues 120–130 carry the 'HIGH' region motif; the sequence is PNIAKPFHIGH.

The protein belongs to the class-I aminoacyl-tRNA synthetase family. Monomer.

The protein localises to the cytoplasm. It catalyses the reaction tRNA(Arg) + L-arginine + ATP = L-arginyl-tRNA(Arg) + AMP + diphosphate. The polypeptide is Arginine--tRNA ligase (Clostridium botulinum (strain 657 / Type Ba4)).